Here is a 1049-residue protein sequence, read N- to C-terminus: Self-sufficient cytochrome P450 monooxygenase CYP505E4 (1049 aa).

Cys-405 is a binding site for heme. Residues 461 to 470 (SATALSQHNM) are compositionally biased toward polar residues. The interval 461-491 (SATALSQHNMSAGATASPGSSTHLAGDENGQ) is disordered. The segment covering 471 to 482 (SAGATASPGSST) has biased composition (low complexity). The Flavodoxin-like domain occupies 499–640 (ISFFYGSNSG…DLEVWEETNL (142 aa)). Residues 505–509 (SNSGT) and 584–616 (VFGC…TRLT) contribute to the FMN site. In terms of domain architecture, FAD-binding FR-type spans 678–906 (RDLVEGKVTA…RPAKDAFHLP (229 aa)).

It in the N-terminal section; belongs to the cytochrome P450 family. It depends on FAD as a cofactor. The cofactor is FMN. Requires heme as cofactor.

It carries out the reaction 2 oxidized [cytochrome P450] + NADPH = 2 reduced [cytochrome P450] + NADP(+) + H(+). The enzyme catalyses an organic molecule + reduced [NADPH--hemoprotein reductase] + O2 = an alcohol + oxidized [NADPH--hemoprotein reductase] + H2O + H(+). The catalysed reaction is dodecanoate + reduced [NADPH--hemoprotein reductase] + O2 = 5-hydroxydodecanoate + oxidized [NADPH--hemoprotein reductase] + H2O + H(+). It catalyses the reaction dodecan-1-ol + reduced [NADPH--hemoprotein reductase] + O2 = 1,5-dodecanediol + oxidized [NADPH--hemoprotein reductase] + H2O + H(+). It carries out the reaction dodecanoate + reduced [NADPH--hemoprotein reductase] + O2 = 9-hydroxydodecanoate + oxidized [NADPH--hemoprotein reductase] + H2O + H(+). The enzyme catalyses dodecan-1-ol + reduced [NADPH--hemoprotein reductase] + O2 = 1,4-dodecanediol + oxidized [NADPH--hemoprotein reductase] + H2O + H(+). The catalysed reaction is dodecan-1-ol + reduced [NADPH--hemoprotein reductase] + O2 = 1,6-dodecanediol + oxidized [NADPH--hemoprotein reductase] + H2O + H(+). Self-sufficient cytochrome P450 monooxygenase that catalyzes the regioselective in-chain hydroxylation of alkanes, fatty alcohols, and fatty acids at the omega-7 position. Performs hydroxylation of C10-C16 n-alkanes and C12 and C14 fatty alcohols; and thereby enables the one step biocatalytic synthesis of rare alcohols such as 5-dodecanol and 7-tetradecanol. Converts 1-dodecanol into 1,5-dodecanediol as major product with very little sub-terminally hydroxylated products with the 1,4-dodecanediol and 1,6-dodecanediol more abundant. Converts dodecanoic acid to 5-hydroxydodecanoic acid which can be further converted into delta-dodecalactone by lactonization of the 5-hydroxy acid at low pH. Also gives sub-terminal hydroxylation of dodecanoic acid with 9-hydroxydodecanoic acid being the second most abundant product. Does not show any significant activity toward tetradecanoic acid. This chain is Self-sufficient cytochrome P450 monooxygenase CYP505E4, found in Penicillium camemberti (strain FM 013).